A 40-amino-acid chain; its full sequence is Alpha-conotoxin-like Qc1.4b (40 aa).

Residues 1 to 19 (SDGRNTAANDKASDLMALR) constitute a propeptide that is removed on maturation. 2 disulfide bridges follow: cysteine 22-cysteine 28 and cysteine 23-cysteine 36. A lacks the Ser-Xaa-Pro motif that is crucial for potent interaction with nAChR region spans residues 24–26 (PNP). Cysteine 36 is subject to Cysteine amide. Residues 37-40 (GGGR) constitute a propeptide that is removed on maturation.

This sequence belongs to the conotoxin A superfamily. In terms of tissue distribution, expressed by the venom duct.

The protein localises to the secreted. Alpha-conotoxins act on postsynaptic membranes, they bind to the nicotinic acetylcholine receptors (nAChR) and thus inhibit them. Has possibly a distinct nAChR binding mode from other alpha-conotoxins, due to a different three residue motif (lacks the Ser-Xaa-Pro motif). This is Alpha-conotoxin-like Qc1.4b from Conus quercinus (Oak cone).